The following is a 382-amino-acid chain: Cysteine desulfurase IscS 1 (382 aa).

Asn149 serves as a coordination point for pyridoxal 5'-phosphate. The Cysteine persulfide intermediate role is filled by Cys321. Cys321 is a binding site for [2Fe-2S] cluster.

This sequence belongs to the class-V pyridoxal-phosphate-dependent aminotransferase family. NifS/IscS subfamily. In terms of assembly, homodimer. Forms a heterotetramer with IscU, interacts with other sulfur acceptors. It depends on pyridoxal 5'-phosphate as a cofactor.

The protein localises to the cytoplasm. The enzyme catalyses (sulfur carrier)-H + L-cysteine = (sulfur carrier)-SH + L-alanine. It functions in the pathway cofactor biosynthesis; iron-sulfur cluster biosynthesis. Master enzyme that delivers sulfur to a number of partners involved in Fe-S cluster assembly, tRNA modification or cofactor biosynthesis. Catalyzes the removal of elemental sulfur atoms from cysteine to produce alanine. Functions as a sulfur delivery protein for Fe-S cluster synthesis onto IscU, an Fe-S scaffold assembly protein, as well as other S acceptor proteins. The sequence is that of Cysteine desulfurase IscS 1 from Archaeoglobus fulgidus (strain ATCC 49558 / DSM 4304 / JCM 9628 / NBRC 100126 / VC-16).